Here is a 66-residue protein sequence, read N- to C-terminus: Protein translocase subunit SecE (66 aa).

The chain crosses the membrane as a helical span at residues 34 to 54 (LVVIVAVFVFSLICLVLDYGI).

Belongs to the SecE/SEC61-gamma family. As to quaternary structure, component of the Sec protein translocase complex. Heterotrimer consisting of SecY, SecE and SecG subunits. The heterotrimers can form oligomers, although 1 heterotrimer is thought to be able to translocate proteins. Interacts with the ribosome. Interacts with SecDF, and other proteins may be involved. Interacts with SecA.

It is found in the cell inner membrane. In terms of biological role, essential subunit of the Sec protein translocation channel SecYEG. Clamps together the 2 halves of SecY. May contact the channel plug during translocation. This is Protein translocase subunit SecE from Rickettsia bellii (strain RML369-C).